The primary structure comprises 72 residues: SPbeta prophage-derived uncharacterized protein YorV (72 aa).

In Bacillus subtilis (strain 168), this protein is SPbeta prophage-derived uncharacterized protein YorV (yorV).